The following is a 1026-amino-acid chain: Leucine-rich repeat and coiled-coil domain-containing protein 1 (1026 aa).

5 LRR repeats span residues 39–60 (SIHA…DHIW), 61–82 (NLRH…NTLT), 83–104 (KLCT…EALV), 105–126 (NLTK…MPLH), and 131–152 (KLRY…LQCT). The LRRCT domain maps to 170–212 (NPICLIPGYRAIILQTLPQLRILDCKNIFGEPVSLEEINSSHL). Residues 310–338 (DNVPEKDLRPKRDTDITSESDYGNRRECS) are disordered. Basic and acidic residues predominate over residues 312 to 324 (VPEKDLRPKRDTD). Positions 428–641 (REMRWKAEQT…DLENEFRIAL (214 aa)) form a coiled coil.

The protein belongs to the LRRCC1 family.

It is found in the cytoplasm. The protein localises to the cytoskeleton. It localises to the microtubule organizing center. The protein resides in the centrosome. Its subcellular location is the centriole. In terms of biological role, required for the organization of the mitotic spindle. Maintains the structural integrity of centrosomes during mitosis. The chain is Leucine-rich repeat and coiled-coil domain-containing protein 1 (Lrrcc1) from Mus musculus (Mouse).